The primary structure comprises 314 residues: Methionyl-tRNA formyltransferase (314 aa).

110 to 113 (SLLP) contacts (6S)-5,6,7,8-tetrahydrofolate.

The protein belongs to the Fmt family.

The enzyme catalyses L-methionyl-tRNA(fMet) + (6R)-10-formyltetrahydrofolate = N-formyl-L-methionyl-tRNA(fMet) + (6S)-5,6,7,8-tetrahydrofolate + H(+). Attaches a formyl group to the free amino group of methionyl-tRNA(fMet). The formyl group appears to play a dual role in the initiator identity of N-formylmethionyl-tRNA by promoting its recognition by IF2 and preventing the misappropriation of this tRNA by the elongation apparatus. The chain is Methionyl-tRNA formyltransferase from Bacillus cereus (strain AH187).